The sequence spans 297 residues: Acetylglutamate kinase (297 aa).

Substrate is bound by residues 68 to 69, Arg90, and Asn195; that span reads GG.

The protein belongs to the acetylglutamate kinase family. ArgB subfamily.

Its subcellular location is the cytoplasm. It carries out the reaction N-acetyl-L-glutamate + ATP = N-acetyl-L-glutamyl 5-phosphate + ADP. It functions in the pathway amino-acid biosynthesis; L-arginine biosynthesis; N(2)-acetyl-L-ornithine from L-glutamate: step 2/4. In terms of biological role, catalyzes the ATP-dependent phosphorylation of N-acetyl-L-glutamate. This Chelativorans sp. (strain BNC1) protein is Acetylglutamate kinase.